Reading from the N-terminus, the 185-residue chain is Ribosome-recycling factor (185 aa).

It belongs to the RRF family.

Its subcellular location is the cytoplasm. Its function is as follows. Responsible for the release of ribosomes from messenger RNA at the termination of protein biosynthesis. May increase the efficiency of translation by recycling ribosomes from one round of translation to another. The protein is Ribosome-recycling factor of Chloroflexus aurantiacus (strain ATCC 29364 / DSM 637 / Y-400-fl).